The following is a 343-amino-acid chain: UDP-3-O-(3-hydroxymyristoyl)glucosamine N-acyltransferase (343 aa).

His-239 functions as the Proton acceptor in the catalytic mechanism.

Belongs to the transferase hexapeptide repeat family. LpxD subfamily. In terms of assembly, homotrimer.

The enzyme catalyses a UDP-3-O-[(3R)-3-hydroxyacyl]-alpha-D-glucosamine + a (3R)-hydroxyacyl-[ACP] = a UDP-2-N,3-O-bis[(3R)-3-hydroxyacyl]-alpha-D-glucosamine + holo-[ACP] + H(+). It carries out the reaction UDP-3-O-[(3R)-3-hydroxytetradecanoyl]-alpha-D-glucosamine + (3R)-hydroxytetradecanoyl-[ACP] = UDP-2-N,3-O-bis[(3R)-3-hydroxytetradecanoyl]-alpha-D-glucosamine + holo-[ACP] + H(+). It participates in glycolipid biosynthesis; lipid IV(A) biosynthesis; lipid IV(A) from (3R)-3-hydroxytetradecanoyl-[acyl-carrier-protein] and UDP-N-acetyl-alpha-D-glucosamine: step 3/6. Its function is as follows. Catalyzes the N-acylation of UDP-3-O-(hydroxytetradecanoyl)glucosamine using 3-hydroxytetradecanoyl-ACP as the acyl donor. Is involved in the biosynthesis of lipid A, a phosphorylated glycolipid that anchors the lipopolysaccharide to the outer membrane of the cell. This is UDP-3-O-(3-hydroxymyristoyl)glucosamine N-acyltransferase from Blochmanniella pennsylvanica (strain BPEN).